The chain runs to 151 residues: UPF0756 membrane protein HSM_1471 (151 aa).

Transmembrane regions (helical) follow at residues 1-21 (MSLQFNSIALLLVSLILLGVL), 52-72 (YGVNIGIIVLTIGVLSPIVSG), 81-101 (ALIHWKMFLAMAVGVLVAWFG), and 123-143 (ILGVAFLGGVPVGPLIAAGIL).

The protein belongs to the UPF0756 family.

It localises to the cell membrane. This chain is UPF0756 membrane protein HSM_1471, found in Histophilus somni (strain 2336) (Haemophilus somnus).